The sequence spans 150 residues: Macrodomain Ter protein (150 aa).

Belongs to the MatP family. Homodimer.

The protein localises to the cytoplasm. In terms of biological role, required for spatial organization of the terminus region of the chromosome (Ter macrodomain) during the cell cycle. Prevents early segregation of duplicated Ter macrodomains during cell division. Binds specifically to matS, which is a 13 bp signature motif repeated within the Ter macrodomain. The sequence is that of Macrodomain Ter protein from Citrobacter koseri (strain ATCC BAA-895 / CDC 4225-83 / SGSC4696).